A 61-amino-acid chain; its full sequence is Large ribosomal subunit protein uL30 (61 aa).

Belongs to the universal ribosomal protein uL30 family. Part of the 50S ribosomal subunit.

The chain is Large ribosomal subunit protein uL30 from Saccharophagus degradans (strain 2-40 / ATCC 43961 / DSM 17024).